The primary structure comprises 424 residues: Serine--tRNA ligase (424 aa).

229–231 is a binding site for L-serine; it reads TAE. An ATP-binding site is contributed by 260–262; that stretch reads RRE. Glu-283 contacts L-serine. Residue 347–350 coordinates ATP; that stretch reads EVSS. Ser-383 is an L-serine binding site.

It belongs to the class-II aminoacyl-tRNA synthetase family. Type-1 seryl-tRNA synthetase subfamily. In terms of assembly, homodimer. The tRNA molecule binds across the dimer.

The protein localises to the cytoplasm. It catalyses the reaction tRNA(Ser) + L-serine + ATP = L-seryl-tRNA(Ser) + AMP + diphosphate + H(+). The enzyme catalyses tRNA(Sec) + L-serine + ATP = L-seryl-tRNA(Sec) + AMP + diphosphate + H(+). It participates in aminoacyl-tRNA biosynthesis; selenocysteinyl-tRNA(Sec) biosynthesis; L-seryl-tRNA(Sec) from L-serine and tRNA(Sec): step 1/1. In terms of biological role, catalyzes the attachment of serine to tRNA(Ser). Is also able to aminoacylate tRNA(Sec) with serine, to form the misacylated tRNA L-seryl-tRNA(Sec), which will be further converted into selenocysteinyl-tRNA(Sec). This is Serine--tRNA ligase from Roseiflexus castenholzii (strain DSM 13941 / HLO8).